The following is a 243-amino-acid chain: Probable transcriptional regulatory protein Bpet3099 (243 aa).

The interval 1-21 (MAGHSKWANIQHRKGRQDAKR) is disordered.

This sequence belongs to the TACO1 family.

The protein resides in the cytoplasm. This chain is Probable transcriptional regulatory protein Bpet3099, found in Bordetella petrii (strain ATCC BAA-461 / DSM 12804 / CCUG 43448).